A 178-amino-acid polypeptide reads, in one-letter code: Ribosomal RNA small subunit methyltransferase G (178 aa).

Residues G54, L59, 105 to 106 (LE), and R120 each bind S-adenosyl-L-methionine.

The protein belongs to the methyltransferase superfamily. RNA methyltransferase RsmG family.

Its subcellular location is the cytoplasm. It catalyses the reaction guanosine(527) in 16S rRNA + S-adenosyl-L-methionine = N(7)-methylguanosine(527) in 16S rRNA + S-adenosyl-L-homocysteine. Specifically methylates the N7 position of guanine in position 527 of 16S rRNA. This is Ribosomal RNA small subunit methyltransferase G from Helicobacter pylori (strain ATCC 700392 / 26695) (Campylobacter pylori).